The sequence spans 190 residues: UPF0340 protein BCE33L5016 (190 aa).

Belongs to the UPF0340 family.

This is UPF0340 protein BCE33L5016 from Bacillus cereus (strain ZK / E33L).